A 414-amino-acid polypeptide reads, in one-letter code: Mannan endo-1,4-beta-mannosidase 3 (414 aa).

An N-terminal signal peptide occupies residues 1 to 19; sequence MKCLCFVVLLAILIAQNSS. N-linked (GlcNAc...) asparagine glycosylation is found at N17 and N75. Residue W87 coordinates substrate. N-linked (GlcNAc...) asparagine glycans are attached at residues N133 and N153. N202 lines the substrate pocket. E203 acts as the Proton donor in catalysis. A substrate-binding site is contributed by Y283. E323 (nucleophile) is an active-site residue. A glycan (N-linked (GlcNAc...) asparagine) is linked at N343. W365 contacts substrate. N386 carries N-linked (GlcNAc...) asparagine glycosylation.

The protein belongs to the glycosyl hydrolase 5 (cellulase A) family. In terms of tissue distribution, expressed in leaves, flowers, siliques and seeds.

It is found in the secreted. It catalyses the reaction Random hydrolysis of (1-&gt;4)-beta-D-mannosidic linkages in mannans, galactomannans and glucomannans.. In Arabidopsis thaliana (Mouse-ear cress), this protein is Mannan endo-1,4-beta-mannosidase 3 (MAN3).